Here is an 85-residue protein sequence, read N- to C-terminus: MDISRTEQRILHLMAQGGRIEISRDDDRKIENVSCFTRDGWLYPGVDLDLFRRLKRLKAIKSSGGQPYRITERGLTLVRSQLDNR.

This sequence belongs to the UPF0386 family.

In Rhizobium etli (strain CIAT 652), this protein is UPF0386 protein RHECIAT_CH0001945.